A 1292-amino-acid polypeptide reads, in one-letter code: MENQQKQLQQGVPELASLAGREESSVRGIDLMRVDQCEEIGVNQVPALSVPASTVAGAVAVPMSNEQEVKVIDEAAPIKRKRGRPPRAQANTPLHIRPPPPPPKKEDKEEDVCFICFDGGDLVLCDRRNCPKAYHPACIKRDEAFFRTTAKWNCGWHICGTCQKASSYMCYTCTFSVCKRCIKDADYVIVRGNMGLCGTCIKPIMLIENIAQGDNEAVKVDFDDKLSWEYLFKVYWLCLKEELSLTVDELTRANNPWKEVPNTAPKVESQNDHTNNRALDVAVNGTKRRRTSDSPTLPNKLDGKNPSNILKKAPGDTSWATKELLEFVSFMKNGDTSVLSQFDVQGLLLDYIKKKNLRDPLQKSQVLCDQMLVKLFGKQRVGHFEMLKLLESHVLIQEKPKGAKTTNGETTHAVPSQIEEDSVHDPMVRDRRRKMRRKTDGRVQNENLDAYAAIDVHNINLIYLRRKFLESLLDDINKVDEKVVGTILRIKVSGSDQKLDIHRLVQVVGTSKAIASYQLGAKTTDVMLEILNLDKREVISIDQLSDQNITEDECKRLRQSIKCGLNKRLTVVDILKTAATLQAMRINEALEAEILKLNHLRDRAKKLELLKSPEERQRLLQEVPEVHTDPSMDPSHALSEDAGLGTRKQDNHVKAQSKGPQNKGVNLNNVGNNVQKKYDAPILRSRNNVHADKDDCSKVHNNSSNIQETGKDDEESEIWHYRDPTGKTQGPFSMVQLRRWKSSGHFPPYLRIWRAHENQDESVLLTDALAGRFDKATTLPSSSSLPQELKPSPHDSGRTGADVNCLQKNQMPVNTSATSSSSSTVTAHSNDPKEKQVVALVACSGKVEDGNSVRPQPQVSCPASISVVPGHVVTPDVRETPGTDQYNTVRADGNHNTTKTLEDETNGGSVSINGSVHAPNLNQESHFLDFPSPTPKSSPEDLEAQAAETIQSLSSCVLVKGPSGVTWSTTTTSTTDAATTTSSVVVTGGQLPQVIQQNTVVLAAPSVKPIELAADHATATQTSDNTQVAQASGWPAIVADPDECDESVSDLLAEVEAMEQNGLPSSPTSTFHCDDDDDLKGPEKDFFNPVARMSLTPETCRLDVSQTSILDNVSAGKSSMLTEAKDNTPFSHCGTAGPELLLFAPPPPPPTAISHDLTLTTTALRLGSETTVEAGTVERLPKSVLGVSSEPSPRSLSSHDSSSARGSTERSPRVSQPKRSSGHSRDRQWLNNGHNSSFNNSHNNRQWPYSNSHGYDHGSGSYAAHPPKGLKICKFYESGYCKRGASCSFWHP.

A compositionally biased stretch (polar residues) spans 1-10 (MENQQKQLQQ). 2 disordered regions span residues 1–24 (MENQ…REES) and 72–107 (IDEA…KKED). Residues 110 to 176 (EDVCFICFDG…SYMCYTCTFS (67 aa)) form a PHD-type zinc finger. Disordered stretches follow at residues 256–313 (PWKE…LKKA) and 401–426 (KGAK…VHDP). One can recognise an SWIB/MDM2 domain in the interval 313 to 396 (APGDTSWATK…LKLLESHVLI (84 aa)). Over residues 404-414 (KTTNGETTHAV) the composition is skewed to polar residues. The Plus3 domain occupies 453–586 (AIDVHNINLI…TAATLQAMRI (134 aa)). Disordered regions lie at residues 624–731 (PEVH…TQGP), 777–832 (TTLP…SNDP), 876–915 (DVRE…INGS), and 1170–1245 (TTVE…HNNR). Residues 661–675 (QNKGVNLNNVGNNVQ) are compositionally biased toward low complexity. Residues 689 to 698 (VHADKDDCSK) show a composition bias toward basic and acidic residues. The segment covering 699 to 708 (VHNNSSNIQE) has biased composition (polar residues). One can recognise a GYF domain in the interval 716-770 (SEIWHYRDPTGKTQGPFSMVQLRRWKSSGHFPPYLRIWRAHENQDESVLLTDALA). A compositionally biased stretch (low complexity) spans 813-829 (VNTSATSSSSSTVTAHS). Composition is skewed to polar residues over residues 882-899 (GTDQ…NTTK) and 906-915 (NGGSVSINGS). Low complexity-rich tracts occupy residues 1188–1206 (SSEP…SARG) and 1231–1244 (NNGH…SHNN). The segment at 1267-1292 (PKGLKICKFYESGYCKRGASCSFWHP) adopts a C3H1-type zinc-finger fold.

This chain is Zinc finger CCCH domain-containing protein 44, found in Arabidopsis thaliana (Mouse-ear cress).